Reading from the N-terminus, the 242-residue chain is Small ribosomal subunit protein uS2 (242 aa).

Belongs to the universal ribosomal protein uS2 family.

The sequence is that of Small ribosomal subunit protein uS2 from Shewanella halifaxensis (strain HAW-EB4).